The primary structure comprises 36 residues: Egg-laying hormone (36 aa).

Residue lysine 36 is modified to Lysine amide.

The protein belongs to the molluscan ELH family. Bag cell neurons.

It is found in the secreted. Functionally, ELH acts as a neurotransmitter locally, upon neurons of the abdominal ganglion and as a hormone by diffusing into the circulating hemolymph and modulating the activity of other organs. It specifically causes contraction of smooth muscle in the ovotestis and expulsion of the egg string. The chain is Egg-laying hormone from Aplysia fasciata (Mottled sea hare).